A 625-amino-acid polypeptide reads, in one-letter code: Interleukin-1 receptor-associated kinase-like 2 (625 aa).

One can recognise a Death domain in the interval leucine 13 to lysine 94. Residues lysine 111–serine 181 are disordered. At serine 144 the chain carries Phosphoserine. The segment covering leucine 169 to serine 181 has biased composition (polar residues). One can recognise a Protein kinase domain in the interval phenylalanine 210–leucine 489. Residues isoleucine 216 to valine 224, lysine 237, and lysine 337 to asparagine 340 each bind ATP. The interval leucine 510–serine 540 is disordered. Residues serine 516–proline 526 show a composition bias toward polar residues.

The protein belongs to the protein kinase superfamily. TKL Ser/Thr protein kinase family. Pelle subfamily. As to quaternary structure, interacts with MYD88. IL-1 stimulation leads to the formation of a signaling complex which dissociates from the IL-1 receptor following the binding of PELI1. In terms of tissue distribution, expressed in spleen, thymus, prostate, lung, liver, skeletal muscle, kidney, pancreas and peripheral blood leukocytes.

Functionally, binds to the IL-1 type I receptor following IL-1 engagement, triggering intracellular signaling cascades leading to transcriptional up-regulation and mRNA stabilization. The protein is Interleukin-1 receptor-associated kinase-like 2 (IRAK2) of Homo sapiens (Human).